The chain runs to 267 residues: N-formylglutamate deformylase (267 aa).

Belongs to the N-formylglutamate deformylase family. Monomer.

It catalyses the reaction N-formyl-L-glutamate + H2O = formate + L-glutamate. It functions in the pathway amino-acid degradation; L-histidine degradation into L-glutamate; L-glutamate from N-formimidoyl-L-glutamate (deiminase route): step 2/2. Its activity is regulated as follows. Stimulated by Co(2+). Fe(2+) is also a good activator, particularly at lower concentrations, but it inhibits slightly the activity when used at concentrations over 0.1 mM. Other divalent metals tested (Cd(2+), Ca(2+), Mn(2+), Zn(2+), Ni(2+) and Mg(2+)) are not effective activators. Its function is as follows. Catalyzes the hydrolysis of N-formyl-L-glutamate to formate and L-glutamate. The chain is N-formylglutamate deformylase from Pseudomonas putida (Arthrobacter siderocapsulatus).